The following is a 299-amino-acid chain: Regucalcin (299 aa).

Glu18 contacts a divalent metal cation. Substrate is bound by residues Arg101, Asn103, and Glu121. Positions 154 and 204 each coordinate a divalent metal cation. Asp204 acts as the Proton donor/acceptor in catalysis. An N6-succinyllysine mark is found at Lys244 and Lys253.

Belongs to the SMP-30/CGR1 family. In terms of assembly, monomer. Requires Zn(2+) as cofactor. The cofactor is Mn(2+). It depends on Ca(2+) as a cofactor. Mg(2+) serves as cofactor.

It is found in the cytoplasm. The catalysed reaction is D-glucono-1,5-lactone + H2O = D-gluconate + H(+). It functions in the pathway cofactor biosynthesis; L-ascorbate biosynthesis via UDP-alpha-D-glucuronate pathway; L-ascorbate from UDP-alpha-D-glucuronate: step 3/4. In terms of biological role, gluconolactonase with low activity towards other sugar lactones, including gulonolactone and galactonolactone. Catalyzes a key step in ascorbic acid (vitamin C) biosynthesis. Can also hydrolyze diisopropyl phosphorofluoridate and phenylacetate (in vitro). Calcium-binding protein. Modulates Ca(2+) signaling, and Ca(2+)-dependent cellular processes and enzyme activities. This Sus scrofa (Pig) protein is Regucalcin (RGN).